Here is a 111-residue protein sequence, read N- to C-terminus: Short neuropeptide F (111 aa).

The signal sequence occupies residues 1–24 (MSAMYAKRCAALVLLVVTVGLVNA). Residues 25–76 (TENYMDYGEEMAEKTPAENIHELYRLLLQRNTLDNAGFGGIPLEHLMIRKSQ) constitute a propeptide that is removed on maturation. F85 bears the Phenylalanine amide mark. Residues 88–111 (SGPHVSARALPRPMGAVAGYDDNN) constitute a propeptide that is removed on maturation.

In terms of tissue distribution, expressed throughout the central nervous system (at protein level).

It is found in the secreted. Functionally, plays a role in controlling food intake and regulating body size. This is Short neuropeptide F from Camponotus floridanus (Florida carpenter ant).